A 137-amino-acid polypeptide reads, in one-letter code: Phosphoribosyl-ATP pyrophosphatase (137 aa).

A compositionally biased stretch (basic and acidic residues) spans 114–124 (EGTSGIEEKAL). Positions 114–137 (EGTSGIEEKALRKSLQRAAEEAQP) are disordered.

The protein belongs to the PRA-PH family.

Its subcellular location is the cytoplasm. It catalyses the reaction 1-(5-phospho-beta-D-ribosyl)-ATP + H2O = 1-(5-phospho-beta-D-ribosyl)-5'-AMP + diphosphate + H(+). The protein operates within amino-acid biosynthesis; L-histidine biosynthesis; L-histidine from 5-phospho-alpha-D-ribose 1-diphosphate: step 2/9. This chain is Phosphoribosyl-ATP pyrophosphatase, found in Paracidovorax citrulli (strain AAC00-1) (Acidovorax citrulli).